The chain runs to 239 residues: Orotidine 5'-phosphate decarboxylase (239 aa).

Substrate-binding positions include aspartate 15, lysine 36, 63–72 (DLKFHDIPNT), threonine 127, arginine 189, glutamine 198, glycine 218, and arginine 219. The active-site Proton donor is the lysine 65.

Belongs to the OMP decarboxylase family. Type 1 subfamily. In terms of assembly, homodimer.

The catalysed reaction is orotidine 5'-phosphate + H(+) = UMP + CO2. It functions in the pathway pyrimidine metabolism; UMP biosynthesis via de novo pathway; UMP from orotate: step 2/2. Catalyzes the decarboxylation of orotidine 5'-monophosphate (OMP) to uridine 5'-monophosphate (UMP). The polypeptide is Orotidine 5'-phosphate decarboxylase (Prochlorococcus marinus subsp. pastoris (strain CCMP1986 / NIES-2087 / MED4)).